A 484-amino-acid chain; its full sequence is Probable peptide/nitrate transporter At3g43790 (484 aa).

A run of 12 helical transmembrane segments spans residues 39–59, 76–96, 107–127, 129–149, 168–188, 210–230, 278–298, 318–338, 355–375, 381–401, 416–436, and 460–480; these read FIWL…PYIY, FYAG…SIFW, PIIL…GLST, FWLA…LGVI, VVST…GYLA, FLPS…CWWL, MAII…NEIF, VGEV…LVYP, VLLI…GVTL, CASI…FIML, ISMT…GVLF, and VFLV…IPYI.

This sequence belongs to the major facilitator superfamily.

The protein localises to the membrane. The protein is Probable peptide/nitrate transporter At3g43790 (ZIFL2) of Arabidopsis thaliana (Mouse-ear cress).